The chain runs to 157 residues: SsrA-binding protein (157 aa).

The interval 132 to 157 (EHDKRDTIKEREGKREVERAMKSRHR) is disordered.

The protein belongs to the SmpB family.

It localises to the cytoplasm. Its function is as follows. Required for rescue of stalled ribosomes mediated by trans-translation. Binds to transfer-messenger RNA (tmRNA), required for stable association of tmRNA with ribosomes. tmRNA and SmpB together mimic tRNA shape, replacing the anticodon stem-loop with SmpB. tmRNA is encoded by the ssrA gene; the 2 termini fold to resemble tRNA(Ala) and it encodes a 'tag peptide', a short internal open reading frame. During trans-translation Ala-aminoacylated tmRNA acts like a tRNA, entering the A-site of stalled ribosomes, displacing the stalled mRNA. The ribosome then switches to translate the ORF on the tmRNA; the nascent peptide is terminated with the 'tag peptide' encoded by the tmRNA and targeted for degradation. The ribosome is freed to recommence translation, which seems to be the essential function of trans-translation. The sequence is that of SsrA-binding protein from Paracidovorax citrulli (strain AAC00-1) (Acidovorax citrulli).